The primary structure comprises 474 residues: MATMYSAAVEVISKETIKPTTPTPSQLKNFNLSLLDQCFPLYYYVPIILFYPATAANSTGSSNHHDDLDLLKSSLSKTLVHFYPMAGRMIDNILVDCHDQGINFYKVKIRGKMCEFMSQPDVPLSQLLPSEVVSASVPKEALVIVQVNMFDCGGTAICSSVSHKIADAATMSTFIRSWASTTKTSRSGGSTAAVTDQKLIPSFDSASLFPPSERLTSPSGMSEIPFSSTPEDTEDDKTVSKRFVFDFAKITSVREKLQVLMHDNYKSRRQTRVEVVTSLIWKSVMKSTPAGFLPVVHHAVNLRKKMDPPLQDVSFGNLSVTVSAFLPATTTTTTNAVNKTINSTSSESQVVLHELHDFIAQMRSEIDKVKGDKGSLEKVIQNFASGHDASIKKINDVEVINFWISSWCRMGLYEIDFGWGKPIWVTVDPNIKPNKNCFFMNDTKCGEGIEVWASFLEDDMAKFELHLSEILELI.

Residue His-163 is the Proton acceptor of the active site. Residues 213–234 (ERLTSPSGMSEIPFSSTPEDTE) are disordered. Over residues 214 to 230 (RLTSPSGMSEIPFSSTP) the composition is skewed to polar residues. Asp-416 (proton acceptor) is an active-site residue.

It belongs to the plant acyltransferase family. As to expression, expressed in root, stem, leaf and capsule of the mature plant. Restricted to sieve elements of the phloem adjacent or proximal to laticifers.

It carries out the reaction (7S)-salutaridinol + acetyl-CoA = (7S)-O-acetylsalutaridinol + CoA. It functions in the pathway alkaloid biosynthesis; morphine biosynthesis. Its function is as follows. Acetyltransferase involved in biosynthesis of morphinan-type benzylisoquinoline and opiate alkaloids natural products. Catalyzes the conversion of the phenanthrene alkaloid salutaridinol to salutaridinol-7-O-acetate, the immediate precursor of thebaine along the morphine biosynthetic pathway. Conversion of 7-O-acetylsalutaridinol into thebaine is spontaneous. The chain is Salutaridinol 7-O-acetyltransferase from Papaver somniferum (Opium poppy).